The chain runs to 365 residues: Aminomethyltransferase (365 aa).

It belongs to the GcvT family. In terms of assembly, the glycine cleavage system is composed of four proteins: P, T, L and H.

It catalyses the reaction N(6)-[(R)-S(8)-aminomethyldihydrolipoyl]-L-lysyl-[protein] + (6S)-5,6,7,8-tetrahydrofolate = N(6)-[(R)-dihydrolipoyl]-L-lysyl-[protein] + (6R)-5,10-methylene-5,6,7,8-tetrahydrofolate + NH4(+). Its function is as follows. The glycine cleavage system catalyzes the degradation of glycine. This chain is Aminomethyltransferase, found in Chlorobaculum tepidum (strain ATCC 49652 / DSM 12025 / NBRC 103806 / TLS) (Chlorobium tepidum).